Here is a 176-residue protein sequence, read N- to C-terminus: Probable chemoreceptor glutamine deamidase CheD (176 aa).

Belongs to the CheD family.

The catalysed reaction is L-glutaminyl-[protein] + H2O = L-glutamyl-[protein] + NH4(+). In terms of biological role, probably deamidates glutamine residues to glutamate on methyl-accepting chemotaxis receptors (MCPs), playing an important role in chemotaxis. The sequence is that of Probable chemoreceptor glutamine deamidase CheD from Rhodospirillum rubrum (strain ATCC 11170 / ATH 1.1.1 / DSM 467 / LMG 4362 / NCIMB 8255 / S1).